Here is a 144-residue protein sequence, read N- to C-terminus: MKTFMAKPQDIKNRKWYVLDAEGKVLGRLAAEAARILRGKHKPDFTPHVDTGDHVIVINAEKVVLTGKKLRDKKYIRHSGYPGGLKVMNYEKLMKTRPELAVEKAIVGMLPHNRLGSRMAKKLKVYRGPEHPHQAQKPEPWQAL.

It belongs to the universal ribosomal protein uL13 family. In terms of assembly, part of the 50S ribosomal subunit.

Functionally, this protein is one of the early assembly proteins of the 50S ribosomal subunit, although it is not seen to bind rRNA by itself. It is important during the early stages of 50S assembly. This Pelotomaculum thermopropionicum (strain DSM 13744 / JCM 10971 / SI) protein is Large ribosomal subunit protein uL13.